Reading from the N-terminus, the 326-residue chain is Fructokinase (326 aa).

A disordered region spans residues 275–326 (EQALRNGPDPRRQSRRRHRLPRRRQSTLGARDWSLRLEQDSDPHPPDDTFSP). Basic residues predominate over residues 287–299 (QSRRRHRLPRRRQ). The span at 307-326 (WSLRLEQDSDPHPPDDTFSP) shows a compositional bias: basic and acidic residues.

The protein belongs to the carbohydrate kinase PfkB family.

The enzyme catalyses D-fructose + ATP = D-fructose 6-phosphate + ADP + H(+). This chain is Fructokinase (frk), found in Rhizobium leguminosarum bv. trifolii.